We begin with the raw amino-acid sequence, 430 residues long: UDP-N-acetylglucosamine 1-carboxyvinyltransferase (430 aa).

Position 22 to 23 (22 to 23 (KN)) interacts with phosphoenolpyruvate. Arg-102 is a binding site for UDP-N-acetyl-alpha-D-glucosamine. Cys-126 serves as the catalytic Proton donor. Cys-126 carries the post-translational modification 2-(S-cysteinyl)pyruvic acid O-phosphothioketal. Residues 131–135 (RPVDL), 172–175 (KVSV), Asp-317, and Ile-339 each bind UDP-N-acetyl-alpha-D-glucosamine.

The protein belongs to the EPSP synthase family. MurA subfamily.

Its subcellular location is the cytoplasm. The catalysed reaction is phosphoenolpyruvate + UDP-N-acetyl-alpha-D-glucosamine = UDP-N-acetyl-3-O-(1-carboxyvinyl)-alpha-D-glucosamine + phosphate. Its pathway is cell wall biogenesis; peptidoglycan biosynthesis. Cell wall formation. Adds enolpyruvyl to UDP-N-acetylglucosamine. In Rhizobium meliloti (strain 1021) (Ensifer meliloti), this protein is UDP-N-acetylglucosamine 1-carboxyvinyltransferase.